Reading from the N-terminus, the 729-residue chain is Fatty acid oxidation complex subunit alpha (729 aa).

An enoyl-CoA hydratase/isomerase region spans residues 1–189; the sequence is MLYKGDTLYL…KIGLVDGVVK (189 aa). D296 contributes to the substrate binding site. Residues 311 to 729 are 3-hydroxyacyl-CoA dehydrogenase; it reads ETPKQAAVLG…ARPVGSLKTA (419 aa). NAD(+) is bound by residues M324, D343, 400–402, K407, and S429; that span reads VVE. The For 3-hydroxyacyl-CoA dehydrogenase activity role is filled by H450. N453 provides a ligand contact to NAD(+). Substrate is bound by residues N500 and Y660. The segment at 707–729 is disordered; sequence TRHNEPYYPPVEPARPVGSLKTA.

In the N-terminal section; belongs to the enoyl-CoA hydratase/isomerase family. The protein in the C-terminal section; belongs to the 3-hydroxyacyl-CoA dehydrogenase family. In terms of assembly, heterotetramer of two alpha chains (FadB) and two beta chains (FadA).

It carries out the reaction a (3S)-3-hydroxyacyl-CoA + NAD(+) = a 3-oxoacyl-CoA + NADH + H(+). It catalyses the reaction a (3S)-3-hydroxyacyl-CoA = a (2E)-enoyl-CoA + H2O. The catalysed reaction is a 4-saturated-(3S)-3-hydroxyacyl-CoA = a (3E)-enoyl-CoA + H2O. The enzyme catalyses (3S)-3-hydroxybutanoyl-CoA = (3R)-3-hydroxybutanoyl-CoA. It carries out the reaction a (3Z)-enoyl-CoA = a 4-saturated (2E)-enoyl-CoA. It catalyses the reaction a (3E)-enoyl-CoA = a 4-saturated (2E)-enoyl-CoA. It participates in lipid metabolism; fatty acid beta-oxidation. Functionally, involved in the aerobic and anaerobic degradation of long-chain fatty acids via beta-oxidation cycle. Catalyzes the formation of 3-oxoacyl-CoA from enoyl-CoA via L-3-hydroxyacyl-CoA. It can also use D-3-hydroxyacyl-CoA and cis-3-enoyl-CoA as substrate. In Salmonella typhi, this protein is Fatty acid oxidation complex subunit alpha.